The following is a 209-amino-acid chain: tRNA(Phe) 7-((3-amino-3-carboxypropyl)-4-demethylwyosine(37)-N(4))-methyltransferase (209 aa).

The protein belongs to the TYW3 family.

It catalyses the reaction 4-demethyl-7-[(3S)-3-amino-3-carboxypropyl]wyosine(37) in tRNA(Phe) + S-adenosyl-L-methionine = 7-[(3S)-3-amino-3-carboxypropyl]wyosine(37) in tRNA(Phe) + S-adenosyl-L-homocysteine + H(+). S-adenosyl-L-methionine-dependent methyltransferase that acts as a component of the wyosine derivatives biosynthesis pathway. Probably methylates N-4 position of wybutosine-86 to produce wybutosine-72. The sequence is that of tRNA(Phe) 7-((3-amino-3-carboxypropyl)-4-demethylwyosine(37)-N(4))-methyltransferase from Saccharolobus solfataricus (strain ATCC 35092 / DSM 1617 / JCM 11322 / P2) (Sulfolobus solfataricus).